We begin with the raw amino-acid sequence, 242 residues long: Uridylate kinase (242 aa).

12–15 (KLSG) serves as a coordination point for ATP. The involved in allosteric activation by GTP stretch occupies residues 20-25 (GQKGYG). Gly54 contacts UMP. ATP contacts are provided by Gly55 and Arg59. UMP-binding positions include Asp74 and 135-142 (TGNPYFST). ATP is bound by residues Gln163, Tyr168, and Asp171.

This sequence belongs to the UMP kinase family. In terms of assembly, homohexamer.

Its subcellular location is the cytoplasm. It catalyses the reaction UMP + ATP = UDP + ADP. Its pathway is pyrimidine metabolism; CTP biosynthesis via de novo pathway; UDP from UMP (UMPK route): step 1/1. Its activity is regulated as follows. Allosterically activated by GTP. Inhibited by UTP. Functionally, catalyzes the reversible phosphorylation of UMP to UDP. This chain is Uridylate kinase, found in Desulforamulus reducens (strain ATCC BAA-1160 / DSM 100696 / MI-1) (Desulfotomaculum reducens).